The following is a 65-amino-acid chain: Large ribosomal subunit protein uL29 (65 aa).

It belongs to the universal ribosomal protein uL29 family.

This chain is Large ribosomal subunit protein uL29, found in Lactobacillus helveticus (strain DPC 4571).